The primary structure comprises 44 residues: MTRGNSNQPISYPIFTFRWLAIHGIAIPTVFFLGAITSMQFIQR.

A helical transmembrane segment spans residues 19 to 35 (WLAIHGIAIPTVFFLGA). A heme-binding site is contributed by His-23.

This sequence belongs to the PsbE/PsbF family. As to quaternary structure, heterodimer of an alpha subunit and a beta subunit. PSII is composed of 1 copy each of membrane proteins PsbA, PsbB, PsbC, PsbD, PsbE, PsbF, PsbH, PsbI, PsbJ, PsbK, PsbL, PsbM, PsbT, PsbX, PsbY, PsbZ, Psb30/Ycf12, at least 3 peripheral proteins of the oxygen-evolving complex and a large number of cofactors. It forms dimeric complexes. It depends on heme b as a cofactor.

It is found in the plastid. The protein resides in the chloroplast thylakoid membrane. This b-type cytochrome is tightly associated with the reaction center of photosystem II (PSII). PSII is a light-driven water:plastoquinone oxidoreductase that uses light energy to abstract electrons from H(2)O, generating O(2) and a proton gradient subsequently used for ATP formation. It consists of a core antenna complex that captures photons, and an electron transfer chain that converts photonic excitation into a charge separation. This Gracilaria tenuistipitata var. liui (Red alga) protein is Cytochrome b559 subunit beta.